We begin with the raw amino-acid sequence, 1187 residues long: Metabotropic glutamate receptor-like protein Q (1187 aa).

The Extracellular segment spans residues 1–735 (MRLFFKFFYL…TIETSNIAKT (735 aa)). Residues asparagine 35, asparagine 44, asparagine 55, asparagine 177, asparagine 258, asparagine 275, asparagine 397, asparagine 402, asparagine 462, asparagine 526, asparagine 527, asparagine 557, asparagine 562, and asparagine 684 are each glycosylated (N-linked (GlcNAc...) asparagine). The helical transmembrane segment at 736 to 756 (VMIITTSILVLLILLCFGITI) threads the bilayer. Residues 757–768 (AYSKEKVINFGN) are Cytoplasmic-facing. A helical transmembrane segment spans residues 769–789 (IVFLILMLFSCLFLCIIIYVS). Over 790 to 796 (IEPTNFS) the chain is Extracellular. N-linked (GlcNAc...) asparagine glycosylation is present at asparagine 794. Residues 797 to 817 (CQFSAIVFPIGIGILFTLTLL) traverse the membrane as a helical segment. Over 818 to 843 (KQYKIYKLFKYSDFLKINTDNLKMVK) the chain is Cytoplasmic. A helical transmembrane segment spans residues 844–864 (YAGLIMVPVFLLVLIGVIVYP). Over 865-888 (SKPTFILDLHTKTATKYCISRKYY) the chain is Extracellular. The chain crosses the membrane as a helical span at residues 889-909 (VFSIVIVVYEVIILLTSCFIA). The Cytoplasmic portion of the chain corresponds to 910–925 (MKSKRYHSTPGTFYES). The chain crosses the membrane as a helical span at residues 926–946 (LFNSILIYNYTLVFIVLIPLF). The Extracellular portion of the chain corresponds to 947 to 955 (YTLQNNPTT). Residues 956 to 976 (IYLIYSIGSSILVFATLSIIF) traverse the membrane as a helical segment. Topologically, residues 977–1095 (IPKINFLFRR…SPSSQSIDFL (119 aa)) are cytoplasmic. The segment covering 1074–1105 (IYPNQIPKQTTNSPSSQSIDFLNNPTIPKNKS) has biased composition (polar residues). The disordered stretch occupies residues 1074 to 1187 (IYPNQIPKQT…RKSMDPSLDS (114 aa)). Positions 1114–1124 (KKPKKKLKSKI) are enriched in basic residues. Positions 1125-1174 (ISKSANSSPNINNNTINNNNNNNNNNNNNNNNNNNNNNINNNNNNNININ) are enriched in low complexity.

It belongs to the G-protein coupled receptor 3 family. GABA-B receptor subfamily.

It is found in the membrane. In Dictyostelium discoideum (Social amoeba), this protein is Metabotropic glutamate receptor-like protein Q (grlQ).